A 330-amino-acid chain; its full sequence is Probable NAD(P)H-dependent D-xylose reductase xyl1 (330 aa).

Residue tyrosine 50 is the Proton donor of the active site. Histidine 112 provides a ligand contact to substrate. Residues 166–167 (SN), 215–224 (SSFGPLSFLE), and 271–281 (KSNNPTRLAQN) contribute to the NAD(+) site.

Belongs to the aldo/keto reductase family.

It catalyses the reaction xylitol + NAD(+) = D-xylose + NADH + H(+). The catalysed reaction is xylitol + NADP(+) = D-xylose + NADPH + H(+). Its pathway is carbohydrate metabolism; D-xylose degradation. Its function is as follows. Catalyzes the initial reaction in the xylose utilization pathway by reducing D-xylose into xylitol. Xylose is a major component of hemicelluloses such as xylan. Most fungi utilize D-xylose via three enzymatic reactions, xylose reductase (XR), xylitol dehydrogenase (XDH), and xylulokinase, to form xylulose 5-phosphate, which enters pentose phosphate pathway. This Aspergillus clavatus (strain ATCC 1007 / CBS 513.65 / DSM 816 / NCTC 3887 / NRRL 1 / QM 1276 / 107) protein is Probable NAD(P)H-dependent D-xylose reductase xyl1 (xyl1).